Here is a 290-residue protein sequence, read N- to C-terminus: 4-hydroxybenzoate octaprenyltransferase (290 aa).

Helical transmembrane passes span 21–41, 44–64, 84–104, 106–126, 142–162, 212–232, 235–255, and 267–287; these read IGTL…VKGM, LSIL…GCVI, LATG…LVFC, FILV…AVFL, LFLG…SIEA, IISL…YLSQ, TSYF…CKLI, and FLNN…GIFF.

The protein belongs to the UbiA prenyltransferase family. Mg(2+) is required as a cofactor.

Its subcellular location is the cell inner membrane. The enzyme catalyses all-trans-octaprenyl diphosphate + 4-hydroxybenzoate = 4-hydroxy-3-(all-trans-octaprenyl)benzoate + diphosphate. It functions in the pathway cofactor biosynthesis; ubiquinone biosynthesis. Functionally, catalyzes the prenylation of para-hydroxybenzoate (PHB) with an all-trans polyprenyl group. Mediates the second step in the final reaction sequence of ubiquinone-8 (UQ-8) biosynthesis, which is the condensation of the polyisoprenoid side chain with PHB, generating the first membrane-bound Q intermediate 3-octaprenyl-4-hydroxybenzoate. The polypeptide is 4-hydroxybenzoate octaprenyltransferase (Pasteurella multocida (strain Pm70)).